A 421-amino-acid polypeptide reads, in one-letter code: ATP-dependent RNA helicase RhlB (421 aa).

The Q motif signature appears at 9–37; sequence QKFSDFALHPKVVEALEKKGFHNCTPIQA. One can recognise a Helicase ATP-binding domain in the interval 40-219; the sequence is LPLTLAGRDV…FEQMNNAEYI (180 aa). ATP is bound at residue 53-60; the sequence is AQTGTGKT. The DEAD box motif lies at 165–168; it reads DEAD. A Helicase C-terminal domain is found at 245 to 390; the sequence is RLLQTLIEEE…VSKYNPDALM (146 aa). The disordered stretch occupies residues 392–421; the sequence is DLPKPLRLTRPRTGNGPRRTGAPRNRRRSG. A compositionally biased stretch (low complexity) spans 402 to 414; it reads PRTGNGPRRTGAP.

This sequence belongs to the DEAD box helicase family. RhlB subfamily. In terms of assembly, component of the RNA degradosome, which is a multiprotein complex involved in RNA processing and mRNA degradation.

The protein resides in the cytoplasm. It carries out the reaction ATP + H2O = ADP + phosphate + H(+). Its function is as follows. DEAD-box RNA helicase involved in RNA degradation. Has RNA-dependent ATPase activity and unwinds double-stranded RNA. The polypeptide is ATP-dependent RNA helicase RhlB (Escherichia coli O157:H7).